Here is a 92-residue protein sequence, read N- to C-terminus: Ribonuclease P protein component 1 (92 aa).

The protein belongs to the eukaryotic/archaeal RNase P protein component 1 family. As to quaternary structure, consists of a catalytic RNA component and at least 4-5 protein subunits.

Its subcellular location is the cytoplasm. It carries out the reaction Endonucleolytic cleavage of RNA, removing 5'-extranucleotides from tRNA precursor.. In terms of biological role, part of ribonuclease P, a protein complex that generates mature tRNA molecules by cleaving their 5'-ends. In Desulfurococcus amylolyticus (strain DSM 18924 / JCM 16383 / VKM B-2413 / 1221n) (Desulfurococcus kamchatkensis), this protein is Ribonuclease P protein component 1.